The chain runs to 297 residues: Sirohydrochlorin cobaltochelatase CbiKP (297 aa).

The first 28 residues, 1–28 (MSRHPMVTRLLCLVFSCLIILACSPAFA), serve as a signal peptide directing secretion. Heme is bound at residue histidine 124. Histidine 182 (proton acceptor) is an active-site residue. Residues histidine 182, glutamate 212, and histidine 244 each coordinate Co(2+).

The protein belongs to the CbiK family. As to quaternary structure, homotetramer; dimer of dimers.

Its subcellular location is the periplasm. The catalysed reaction is Co-sirohydrochlorin + 2 H(+) = sirohydrochlorin + Co(2+). It catalyses the reaction siroheme + 2 H(+) = sirohydrochlorin + Fe(2+). Functionally, catalyzes the insertion of Co(2+) into sirohydrochlorin. To a lesser extent, is also able to insert Fe(2+) into sirohydrochlorin, yielding siroheme. Its periplasmic location means that it cannot participate in cobalamin biosynthesis and its genomic environment suggests it is likely to be associated with a heme or metal transport system. The protein is Sirohydrochlorin cobaltochelatase CbiKP (cbiKp) of Nitratidesulfovibrio vulgaris (strain ATCC 29579 / DSM 644 / CCUG 34227 / NCIMB 8303 / VKM B-1760 / Hildenborough) (Desulfovibrio vulgaris).